The following is a 141-amino-acid chain: Nucleoside diphosphate kinase (141 aa).

K11, F59, R87, T93, R104, and N114 together coordinate ATP. H117 serves as the catalytic Pros-phosphohistidine intermediate.

The protein belongs to the NDK family. In terms of assembly, homotetramer. Mg(2+) serves as cofactor.

Its subcellular location is the cytoplasm. It catalyses the reaction a 2'-deoxyribonucleoside 5'-diphosphate + ATP = a 2'-deoxyribonucleoside 5'-triphosphate + ADP. The enzyme catalyses a ribonucleoside 5'-diphosphate + ATP = a ribonucleoside 5'-triphosphate + ADP. Functionally, major role in the synthesis of nucleoside triphosphates other than ATP. The ATP gamma phosphate is transferred to the NDP beta phosphate via a ping-pong mechanism, using a phosphorylated active-site intermediate. The polypeptide is Nucleoside diphosphate kinase (Azoarcus sp. (strain BH72)).